The sequence spans 349 residues: YEVGMMKGGIRKDRRGGRMLKHKRQREENDSRNAGALTEARSTALWPSPLMIKHSKKNSPALSLTADQMVSALLEAEPPVVYSEYDPSRPFNEASVMTLLTNLADRELVHMINWAKRVPGFVDLALHDQVHLLECAWLEILMVGLVWRSMEHPGKLLFAPNLLLDRSHGKVVEGFVEIFDMLLAASSRFRMMNVRGEEFVCLKSIILLNPGIYTYLSSTLKSVEERDHIHRVLDKITDTLMHLMAKSGLSLQQQHRRLAQLLLILSHIRHMSNKGMEHLYSMKCKNVVPLYDLLLEMLDAHRLHAPAAKGSPPSEDDPLNQLAVPSPSMHSLLPCYVNKQEEGNEQEAI.

Positions 1–5 (YEVGM) form a DNA-binding region, nuclear receptor. The disordered stretch occupies residues 1–38 (YEVGMMKGGIRKDRRGGRMLKHKRQREENDSRNAGALT). Residues 12 to 24 (KDRRGGRMLKHKR) are compositionally biased toward basic residues. One can recognise an NR LBD domain in the interval 65–301 (TADQMVSALL…DLLLEMLDAH (237 aa)). Positions 306–327 (PAAKGSPPSEDDPLNQLAVPSP) are disordered.

It belongs to the nuclear hormone receptor family. NR3 subfamily. In terms of assembly, binds DNA as a homodimer. Can form a heterodimer with ER-beta.

The protein resides in the nucleus. Functionally, the steroid hormones and their receptors are involved in the regulation of eukaryotic gene expression and affect cellular proliferation and differentiation in target tissues. The sequence is that of Estrogen receptor (ESR1) from Anolis carolinensis (Green anole).